A 647-amino-acid chain; its full sequence is DNA mismatch repair protein MutL (647 aa).

It belongs to the DNA mismatch repair MutL/HexB family.

This protein is involved in the repair of mismatches in DNA. It is required for dam-dependent methyl-directed DNA mismatch repair. May act as a 'molecular matchmaker', a protein that promotes the formation of a stable complex between two or more DNA-binding proteins in an ATP-dependent manner without itself being part of a final effector complex. This chain is DNA mismatch repair protein MutL, found in Koribacter versatilis (strain Ellin345).